The sequence spans 352 residues: Anthranilate phosphoribosyltransferase (352 aa).

5-phospho-alpha-D-ribose 1-diphosphate contacts are provided by residues glycine 94, 97–98 (GS), serine 102, 104–107 (NIST), 122–130 (KHGNRAVSS), and serine 134. Residue glycine 94 coordinates anthranilate. A Mg(2+)-binding site is contributed by serine 106. Residue asparagine 125 participates in anthranilate binding. Residue arginine 180 participates in anthranilate binding. Mg(2+) contacts are provided by aspartate 239 and glutamate 240.

Belongs to the anthranilate phosphoribosyltransferase family. In terms of assembly, homodimer. Mg(2+) serves as cofactor.

It carries out the reaction N-(5-phospho-beta-D-ribosyl)anthranilate + diphosphate = 5-phospho-alpha-D-ribose 1-diphosphate + anthranilate. It participates in amino-acid biosynthesis; L-tryptophan biosynthesis; L-tryptophan from chorismate: step 2/5. Its function is as follows. Catalyzes the transfer of the phosphoribosyl group of 5-phosphorylribose-1-pyrophosphate (PRPP) to anthranilate to yield N-(5'-phosphoribosyl)-anthranilate (PRA). The sequence is that of Anthranilate phosphoribosyltransferase from Geobacter sp. (strain M21).